A 521-amino-acid chain; its full sequence is Lipid-translocating exporter-like protein RTA1 (521 aa).

Transmembrane regions (helical) follow at residues 186–206 (GAPIFFTIAFAISTILHSWQC), 211–231 (AWKLIWLQPACAALFTLGYAL), 249–269 (LALFILSQICIYLGPPLLELA), 292–312 (VTAFFGGLMAIVEGLSGSGVS), 332–352 (LVALALQVCVIFIFVYLSVLF), 371–391 (TLMTLYLSMALIFIRCVFRLV), and 418–438 (EAYFYAFEASLMLINSFLWNV). Residues 493-521 (THSQPQELYENPNGNGHKKFRLGNGGRAT) form a disordered region.

It belongs to the lipid-translocating exporter (LTE) (TC 9.A.26.1) family.

Its subcellular location is the membrane. Its function is as follows. Lipid-translocating exporter-like protein; part of the gene cluster that mediates the biosynthesis of phomenoic acid, a long chain aliphatic carboxylic acid that does not appear to be essential for pathogenicity but may play a role in allowing to outcompete other fungi in the environmental niche via its antifungal properties. The protein is Lipid-translocating exporter-like protein RTA1 of Leptosphaeria maculans (strain JN3 / isolate v23.1.3 / race Av1-4-5-6-7-8) (Blackleg fungus).